The sequence spans 23 residues: Large ribosomal subunit protein uL10 (23 aa).

It belongs to the universal ribosomal protein uL10 family. As to quaternary structure, part of the ribosomal stalk of the 50S ribosomal subunit. The N-terminus interacts with L11 and the large rRNA to form the base of the stalk. The C-terminus forms an elongated spine to which L12 dimers bind in a sequential fashion forming a multimeric L10(L12)X complex.

Forms part of the ribosomal stalk, playing a central role in the interaction of the ribosome with GTP-bound translation factors. This chain is Large ribosomal subunit protein uL10 (rplJ), found in Klebsiella pneumoniae.